The following is a 148-amino-acid chain: Large ribosomal subunit protein bL9 (148 aa).

It belongs to the bacterial ribosomal protein bL9 family.

In terms of biological role, binds to the 23S rRNA. The chain is Large ribosomal subunit protein bL9 from Clostridium perfringens (strain ATCC 13124 / DSM 756 / JCM 1290 / NCIMB 6125 / NCTC 8237 / Type A).